The following is a 229-amino-acid chain: 7-cyano-7-deazaguanine synthase (229 aa).

12 to 22 (LSGGMDSCVCA) lines the ATP pocket. Residues C194, C202, C205, and C208 each coordinate Zn(2+).

It belongs to the QueC family. It depends on Zn(2+) as a cofactor.

It carries out the reaction 7-carboxy-7-deazaguanine + NH4(+) + ATP = 7-cyano-7-deazaguanine + ADP + phosphate + H2O + H(+). It participates in purine metabolism; 7-cyano-7-deazaguanine biosynthesis. In terms of biological role, catalyzes the ATP-dependent conversion of 7-carboxy-7-deazaguanine (CDG) to 7-cyano-7-deazaguanine (preQ(0)). The polypeptide is 7-cyano-7-deazaguanine synthase (Acidobacterium capsulatum (strain ATCC 51196 / DSM 11244 / BCRC 80197 / JCM 7670 / NBRC 15755 / NCIMB 13165 / 161)).